A 332-amino-acid chain; its full sequence is Anthranilate phosphoribosyltransferase (332 aa).

5-phospho-alpha-D-ribose 1-diphosphate is bound by residues G80, G83–D84, T88, N90–T93, K108–G116, and S120. G80 provides a ligand contact to anthranilate. S92 lines the Mg(2+) pocket. N111 contributes to the anthranilate binding site. Anthranilate is bound at residue R166. The Mg(2+) site is built by D224 and E225.

This sequence belongs to the anthranilate phosphoribosyltransferase family. In terms of assembly, homodimer. It depends on Mg(2+) as a cofactor.

It catalyses the reaction N-(5-phospho-beta-D-ribosyl)anthranilate + diphosphate = 5-phospho-alpha-D-ribose 1-diphosphate + anthranilate. The protein operates within amino-acid biosynthesis; L-tryptophan biosynthesis; L-tryptophan from chorismate: step 2/5. In terms of biological role, catalyzes the transfer of the phosphoribosyl group of 5-phosphorylribose-1-pyrophosphate (PRPP) to anthranilate to yield N-(5'-phosphoribosyl)-anthranilate (PRA). The sequence is that of Anthranilate phosphoribosyltransferase from Pyrobaculum calidifontis (strain DSM 21063 / JCM 11548 / VA1).